A 351-amino-acid polypeptide reads, in one-letter code: Quinolinate phosphoribosyltransferase [decarboxylating] 2, mitochondrial (351 aa).

Substrate contacts are provided by residues R142, 173-175 (TRK), R197, K207, E240, D267, 299-301 (SGN), and 320-322 (SGA).

This sequence belongs to the NadC/ModD family.

It localises to the mitochondrion. The catalysed reaction is nicotinate beta-D-ribonucleotide + CO2 + diphosphate = quinolinate + 5-phospho-alpha-D-ribose 1-diphosphate + 2 H(+). It functions in the pathway alkaloid biosynthesis; nicotine biosynthesis. Its pathway is cofactor biosynthesis; NAD(+) biosynthesis; nicotinate D-ribonucleotide from quinolinate: step 1/1. In terms of biological role, involved in the biosynthesis of pyridine alkaloid natural products, leading mainly to the production of anabasine, anatabine, nicotine and nornicotine, effective deterrents against herbivores with antiparasitic and pesticide properties (neurotoxins); nornicotine serves as the precursor in the synthesis of the carcinogen compound N'-nitrosonornicotine (NNN). Involved in the catabolism of quinolinic acid (QA). The polypeptide is Quinolinate phosphoribosyltransferase [decarboxylating] 2, mitochondrial (Nicotiana glauca (Glaucous tobacco)).